The sequence spans 535 residues: Peptide chain release factor 3 (535 aa).

Residues 8 to 278 (ARRRTFAIIS…VDQAPAPGPR (271 aa)) form the tr-type G domain. GTP is bound by residues 17–24 (SHPDAGKT), 85–89 (DTPGH), and 139–142 (NKLD).

This sequence belongs to the TRAFAC class translation factor GTPase superfamily. Classic translation factor GTPase family. PrfC subfamily.

Its subcellular location is the cytoplasm. In terms of biological role, increases the formation of ribosomal termination complexes and stimulates activities of RF-1 and RF-2. It binds guanine nucleotides and has strong preference for UGA stop codons. It may interact directly with the ribosome. The stimulation of RF-1 and RF-2 is significantly reduced by GTP and GDP, but not by GMP. The polypeptide is Peptide chain release factor 3 (Bordetella parapertussis (strain 12822 / ATCC BAA-587 / NCTC 13253)).